Here is a 1035-residue protein sequence, read N- to C-terminus: Probable LRR receptor-like serine/threonine-protein kinase At1g53440 (1035 aa).

Residues 1–26 form the signal peptide; sequence MGFFFSTRKGLLLIIFICLDIFGSNA. At 27–607 the chain is on the extracellular side; it reads QLLPEDEVQT…VDTGKPLSNG (581 aa). Residues Asn46, Asn75, Asn83, and Asn110 are each glycosylated (N-linked (GlcNAc...) asparagine). LRR repeat units follow at residues 87-110, 111-135, 137-158, 160-182, 183-206, 208-232, and 234-254; these read VCRVTNIQLRGFNLRGIIPPEFGN, LTRLTEIDLVLNFLSGTIPTTLSQI, LEILAVTGNRLSGPFPPQLGQI, TLTDVIMESNLFTGQLPPNLGNL, RSLKRLLISSNNITGRIPESLSNL, NLTNFRIDGNSLSGKIPDFIGNWTR, and VRLDLQGTSMEGPIPASISNL. 3 N-linked (GlcNAc...) asparagine glycosylation sites follow: Asn194, Asn208, and Asn229. 2 N-linked (GlcNAc...) asparagine glycosylation sites follow: Asn256 and Asn277. LRR repeat units follow at residues 278-302, 303-326, 328-349, and 350-372; these read MTNMERLVLRNCLIREPIPEYIGTS, MTMLKLLDLSSNMLNGTIPDTFRS, NAFNFMYLNNNSLTGPVPQFIL, and DSKQNIDLSYNNFTQPPTLSCNQ. 6 N-linked (GlcNAc...) asparagine glycosylation sites follow: Asn317, Asn337, Asn361, Asn386, Asn469, and Asn559. Residues 608 to 628 traverse the membrane as a helical segment; that stretch reads VVAGIVIAACVAFGLLVLVIL. The Cytoplasmic portion of the chain corresponds to 629–1035; that stretch reads RLTGYLGGKE…LDDLTDVEIE (407 aa). Thr656 is subject to Phosphothreonine. Residues 667 to 948 form the Protein kinase domain; it reads FDPENKIGEG…QGKIKVQPPL (282 aa). ATP is bound by residues 673–681 and Lys695; that span reads IGEGGFGPV. Tyr740 is modified (phosphotyrosine). Asp793 functions as the Proton acceptor in the catalytic mechanism. The residue at position 826 (Ser826) is a Phosphoserine. Residues Thr827 and Thr832 each carry the phosphothreonine modification. Tyr840 is subject to Phosphotyrosine. Residues 969-1035 are disordered; the sequence is LSQDSESQVS…LDDLTDVEIE (67 aa). Residues 972-981 show a composition bias toward polar residues; that stretch reads DSESQVSTYT. Residues 1009–1023 are compositionally biased toward low complexity; it reads SLLQQEEGNSSSSSR.

Belongs to the protein kinase superfamily. Ser/Thr protein kinase family.

The protein resides in the cell membrane. It catalyses the reaction L-seryl-[protein] + ATP = O-phospho-L-seryl-[protein] + ADP + H(+). It carries out the reaction L-threonyl-[protein] + ATP = O-phospho-L-threonyl-[protein] + ADP + H(+). The chain is Probable LRR receptor-like serine/threonine-protein kinase At1g53440 from Arabidopsis thaliana (Mouse-ear cress).